The primary structure comprises 289 residues: Bifunctional protein FolD (289 aa).

Residues 166 to 168, Ser191, and Ile232 contribute to the NADP(+) site; that span reads GRS.

It belongs to the tetrahydrofolate dehydrogenase/cyclohydrolase family. In terms of assembly, homodimer.

It catalyses the reaction (6R)-5,10-methylene-5,6,7,8-tetrahydrofolate + NADP(+) = (6R)-5,10-methenyltetrahydrofolate + NADPH. The catalysed reaction is (6R)-5,10-methenyltetrahydrofolate + H2O = (6R)-10-formyltetrahydrofolate + H(+). It participates in one-carbon metabolism; tetrahydrofolate interconversion. Functionally, catalyzes the oxidation of 5,10-methylenetetrahydrofolate to 5,10-methenyltetrahydrofolate and then the hydrolysis of 5,10-methenyltetrahydrofolate to 10-formyltetrahydrofolate. In Synechococcus elongatus (strain ATCC 33912 / PCC 7942 / FACHB-805) (Anacystis nidulans R2), this protein is Bifunctional protein FolD.